A 684-amino-acid polypeptide reads, in one-letter code: Glycine--tRNA ligase beta subunit (684 aa).

It belongs to the class-II aminoacyl-tRNA synthetase family. Tetramer of two alpha and two beta subunits.

It is found in the cytoplasm. It carries out the reaction tRNA(Gly) + glycine + ATP = glycyl-tRNA(Gly) + AMP + diphosphate. The polypeptide is Glycine--tRNA ligase beta subunit (Pseudomonas savastanoi pv. phaseolicola (strain 1448A / Race 6) (Pseudomonas syringae pv. phaseolicola (strain 1448A / Race 6))).